The chain runs to 429 residues: Adenylosuccinate synthetase (429 aa).

GTP is bound by residues 12–18 and 40–42; these read GDEGKGK and GHT. The active-site Proton acceptor is the D13. 2 residues coordinate Mg(2+): D13 and G40. IMP is bound by residues 13–16, 38–41, T130, R144, Q225, T240, and R304; these read DEGK and NAGH. Catalysis depends on H41, which acts as the Proton donor. 300–306 serves as a coordination point for substrate; it reads ATTGRPR. GTP contacts are provided by residues R306, 332 to 334, and 414 to 416; these read KLD and SVG.

This sequence belongs to the adenylosuccinate synthetase family. Homodimer. Mg(2+) serves as cofactor.

The protein resides in the cytoplasm. It carries out the reaction IMP + L-aspartate + GTP = N(6)-(1,2-dicarboxyethyl)-AMP + GDP + phosphate + 2 H(+). It participates in purine metabolism; AMP biosynthesis via de novo pathway; AMP from IMP: step 1/2. Its function is as follows. Plays an important role in the de novo pathway of purine nucleotide biosynthesis. Catalyzes the first committed step in the biosynthesis of AMP from IMP. This Syntrophobacter fumaroxidans (strain DSM 10017 / MPOB) protein is Adenylosuccinate synthetase.